A 327-amino-acid polypeptide reads, in one-letter code: MALVHKLLRGTYFLRKFSKPTSALYPFLGIRFAEYSSSLQKPVASPGKASSQRKTEGDLQGDHQKEVALDITSSEEKPDVSFDKAIRDEAIYHFRLLKDEIVDHWRGPEGHPLHEVLLEQAKVVWQFRGKEDLDKWTVTSDKTIGGRSEVFLKMGKNNQSALLYGTLSSEAPQDGESTRSGYCAMISRIPRGAFERKMSYDWSQFNTLYLRVRGDGRPWMVNIKEDTDFFQRTNQMYSYFMFTRGGPYWQEVKIPFSKFFFSNRGRIRDVQHELPLDKISSIGFTLADKVDGPFFLEIDFIGVFTDPAHTEEFAYENSPELNPRLFK.

A mitochondrion-targeting transit peptide spans 1 to 24 (MALVHKLLRGTYFLRKFSKPTSAL). A disordered region spans residues 42–63 (PVASPGKASSQRKTEGDLQGDH). The segment covering 53–63 (RKTEGDLQGDH) has biased composition (basic and acidic residues). At serine 318 the chain carries Phosphoserine.

This sequence belongs to the CIA30 family. In terms of assembly, part of the mitochondrial complex I assembly/MCIA complex that comprises at least the core subunits TMEM126B, NDUFAF1, ECSIT and ACAD9 and complement subunits such as COA1 and TMEM186. Interacts with ECSIT. Interacts with ACAD9. At early stages of complex I assembly, it is found in intermediate subcomplexes that contain different subunits including NDUFB6, NDUFA6, NDUFA9, NDUFS3, NDUFS7, ND1, ND2 and ND3. Interacts with TMEM70 and TMEM242. Ubiquitous.

It localises to the mitochondrion. The protein localises to the mitochondrion matrix. In terms of biological role, as part of the MCIA complex, involved in the assembly of the mitochondrial complex I. This Homo sapiens (Human) protein is Complex I intermediate-associated protein 30, mitochondrial.